A 184-amino-acid chain; its full sequence is uncharacterized protein (184 aa).

Belongs to the PhzF family.

The protein resides in the cytoplasm. Its subcellular location is the nucleus. This is an uncharacterized protein from Schizosaccharomyces pombe (strain 972 / ATCC 24843) (Fission yeast).